We begin with the raw amino-acid sequence, 308 residues long: Acyl transferase (308 aa).

Catalysis depends on charge relay system residues Ser-116, Asp-213, and His-243.

The protein belongs to the LuxD family.

It functions in the pathway lipid metabolism; fatty acid reduction for biolumincescence. In terms of biological role, acyl transferase is part of the fatty acid reductase system required for aldehyde biosynthesis; it produces fatty acids for the luminescent reaction. The sequence is that of Acyl transferase from Shewanella hanedai (Alteromonas hanedai).